The primary structure comprises 103 residues: N(4)-acetylcytidine amidohydrolase (103 aa).

Residues 6 to 101 form the ASCH domain; the sequence is ITFFQRFQDD…QTQFYVIEFK (96 aa). The active-site Proton acceptor is the K21. Catalysis depends on T24, which acts as the Nucleophile. E74 serves as the catalytic Proton donor.

Belongs to the N(4)-acetylcytidine amidohydrolase family.

It catalyses the reaction N(4)-acetylcytidine + H2O = cytidine + acetate + H(+). The enzyme catalyses N(4)-acetyl-2'-deoxycytidine + H2O = 2'-deoxycytidine + acetate + H(+). The catalysed reaction is N(4)-acetylcytosine + H2O = cytosine + acetate + H(+). Catalyzes the hydrolysis of N(4)-acetylcytidine (ac4C). The sequence is that of N(4)-acetylcytidine amidohydrolase (yqfB) from Escherichia coli O8 (strain IAI1).